The chain runs to 945 residues: MAANGRASVRPVERHGAPPRPAGRSRSVAPPSRRPSPSPSRARPAAADNDGGSDSCRVRVAVRLRPKNSEDLAHGADFDSCVELQPECKKLKLKKNNWSCESYRFDEVFSENASQKRVYEVVAKPVVESVLEGYNGTVMAYGQTGTGKTYTVGRLGNDDPSEGGIMVRALEHILSVMSLETDSVAISFLQLYLESVQDLLAPEKTNIPIVEDPKTGEVSLPGAAKVEIRDLEHVFQLLQIGEMNRHAANTKMNTESSRSHAILIIHIQRSSRIEDGSNTSLPNGTDNLFPDNLPLVLKSKLLIVDLAGSERIDKSGSEGHMIEEAKFINLSLTSLGKCINALAENSPHIPTRDSKLTRILRDSFGGTARTSLIVTIGPSSRHFSETSSTIMFGQRAMKIVNTIRIKEEVDYESLYKKVEHEVDHLTSEMERQQKLKNSEKMQLEKKLKESEASLNDLKVTSNMQIENMAMEKRQLESTIKRLMLDLEKEKGKNNILSEQIIHLETSLDENKQKQLENISNTNILADTTKSHEKKIRELLKQLEDERSRSASMNDHLNVLQQQLSDAQNYFQKNIACELEKQLSRTTEEFASQISSLEERIADLISEKELVYEELKSTQEKMQQEMRHRQGLEDEILRLKQSLADNCSEESKALCGMVRSGSGLGSVPFMSKSGKSRELLSSQRSNISKIFEEVGLPNVLALLKSDELEVQIHAVKVVANLAAEDVNQEKIVEEGGLDALLSLLETSENTTIHRVTAGAIANLAMNGSNQGLIMNKGGARLLANIASKTNDPQTLRMVAGALANLCGNEKLHVMLKQDGGIKALLGMFRTGHNEVIAQIARGMANFAKCESRVISQGHRKGRSLLIEEGVLNWMVANSSAFSASTRRHIELAFCHLAQNEDNARDIILTGGIKELLRISRESSRDDTRNLAKKALNSNPAFFKEIQ.

A disordered region spans residues 1–54 (MAANGRASVRPVERHGAPPRPAGRSRSVAPPSRRPSPSPSRARPAAADNDGGSD). The span at 22 to 31 (AGRSRSVAPP) shows a compositional bias: low complexity. The 343-residue stretch at 57-399 (RVRVAVRLRP…IMFGQRAMKI (343 aa)) folds into the Kinesin motor domain. Residue 142 to 149 (GQTGTGKT) participates in ATP binding. Residues 369–377 (RTSLIVTIG) carry the D-BOX motif. Residues 415 to 644 (YKKVEHEVDH…ILRLKQSLAD (230 aa)) are a coiled coil. ARM repeat units lie at residues 683-722 (RSNISKIFEEVGLPNVLALLKSDELEVQIHAVKVVANLAA), 724-764 (DVNQ…NLAM), 766-806 (GSNQ…NLCG), and 808-847 (EKLHVMLKQDGGIKALLGMFRTGHNEVIAQIARGMANFAK).

It belongs to the TRAFAC class myosin-kinesin ATPase superfamily. Kinesin family. Ungrouped subfamily.

It is found in the cytoplasm. The protein resides in the cytoskeleton. This Oryza sativa subsp. japonica (Rice) protein is Kinesin-like protein KIN-UA.